A 170-amino-acid chain; its full sequence is Adenine phosphoribosyltransferase (170 aa).

This sequence belongs to the purine/pyrimidine phosphoribosyltransferase family. In terms of assembly, homodimer.

The protein resides in the cytoplasm. It catalyses the reaction AMP + diphosphate = 5-phospho-alpha-D-ribose 1-diphosphate + adenine. The protein operates within purine metabolism; AMP biosynthesis via salvage pathway; AMP from adenine: step 1/1. Catalyzes a salvage reaction resulting in the formation of AMP, that is energically less costly than de novo synthesis. The sequence is that of Adenine phosphoribosyltransferase from Geobacillus thermodenitrificans (strain NG80-2).